The chain runs to 306 residues: tRNA dimethylallyltransferase (306 aa).

ATP is bound at residue Gly11–Ser18. Thr13–Ser18 contributes to the substrate binding site. The segment at Asp35–Gln38 is interaction with substrate tRNA.

It belongs to the IPP transferase family. As to quaternary structure, monomer. It depends on Mg(2+) as a cofactor.

It carries out the reaction adenosine(37) in tRNA + dimethylallyl diphosphate = N(6)-dimethylallyladenosine(37) in tRNA + diphosphate. Catalyzes the transfer of a dimethylallyl group onto the adenine at position 37 in tRNAs that read codons beginning with uridine, leading to the formation of N6-(dimethylallyl)adenosine (i(6)A). The chain is tRNA dimethylallyltransferase from Borreliella burgdorferi (strain ATCC 35210 / DSM 4680 / CIP 102532 / B31) (Borrelia burgdorferi).